The chain runs to 413 residues: Unsaturated 3S-rhamnoglycuronyl hydrolase (413 aa).

Residues 1–21 form the signal peptide; sequence MNHTKLKLSAVALTLALGLSA. Cysteine 22 is lipidated: N-palmitoyl cysteine. The S-diacylglycerol cysteine moiety is linked to residue cysteine 22. Aspartate 203 (proton donor) is an active-site residue.

This sequence belongs to the glycosyl hydrolase 105 family.

It localises to the cell membrane. Its function is as follows. Glucuronyl hydrolase involved in ulvan degradation. Ulvan is the main polysaccharide component of the Ulvales (green seaweed) cell wall. It is composed of disaccharide building blocks comprising 3-sulfated rhamnose (Rha3S) linked to D-glucuronic acid (GlcA), L-iduronic acid (IduA), or D-xylose (Xyl). Unsaturated 3S-rhamnoglycuronyl hydrolase works together with ulvan lyases to fully degrade the ulvan polymer, catalyzing specifically the cleavage of the unsaturated 4-deoxy-L-threo-hex-4-enopyranosiduronic acid (deltaUA) of the deltaUA-oligosaccharides deltaUA-Rha3S, deltaUA-Rha3S-IduA-Rha3S and deltaUA-Rha3S-Xyl-Rha3S, the end products of the ulvan lyase reaction. The polypeptide is Unsaturated 3S-rhamnoglycuronyl hydrolase (Alteromonas sp. (strain LOR)).